A 426-amino-acid polypeptide reads, in one-letter code: MLALRVLLKGKILIGGRVREREVLAEDGWIVKIGKRLNEEADLTLELGKRELAVPAPIDLHVHCRDPHPDYPFGFKTETRRFLLGGVATVVDMPNTRPAPTTPETYYEKEELARENAEIEVIVAGGVRDSQCTKELVEAGAYVLGEVFLATSTDAPAVPWSTLPEIFRELSPDGPLTIFHPELDELVAERPARNLYEHLKNRPPEAETTAVGLLAGLKVRYPSRIHLSHVTLPESVKIAKGADITVDVTPHHLFFDVLRVDPEDPVFKVNPPLRGRHHRLGLLRAVRRGDVDVLASDHAPHILEDEFEDVPSGVTGGEIILPAALTLHRRFGLSLRDAVAMITCRPAKLLGRDDLGEVAVGKRARITVVRMREFVVRAEEFGEEDRKFPYDGMRMFGEPVKLIDGTKVYDLKESRREGKPVILEGE.

2 residues coordinate Zn(2+): His61 and His63. Substrate contacts are provided by residues 63-65 (HCR) and Asn95. The Zn(2+) site is built by Glu146, His180, His229, and Asp297. Residue Asp297 is part of the active site. His301 contacts substrate.

This sequence belongs to the metallo-dependent hydrolases superfamily. DHOase family. Class I DHOase subfamily. It depends on Zn(2+) as a cofactor.

It catalyses the reaction (S)-dihydroorotate + H2O = N-carbamoyl-L-aspartate + H(+). The protein operates within pyrimidine metabolism; UMP biosynthesis via de novo pathway; (S)-dihydroorotate from bicarbonate: step 3/3. In terms of biological role, catalyzes the reversible cyclization of carbamoyl aspartate to dihydroorotate. This chain is Dihydroorotase, found in Methanopyrus kandleri (strain AV19 / DSM 6324 / JCM 9639 / NBRC 100938).